Consider the following 251-residue polypeptide: Glutamate 5-kinase (251 aa).

Position 7 (Lys7) interacts with ATP. Substrate-binding residues include Ser45, Asp130, and Asn142. ATP is bound by residues 162-163 and 204-210; these read SD and TGGIVTK.

Belongs to the glutamate 5-kinase family.

The protein localises to the cytoplasm. It catalyses the reaction L-glutamate + ATP = L-glutamyl 5-phosphate + ADP. The protein operates within amino-acid biosynthesis; L-proline biosynthesis; L-glutamate 5-semialdehyde from L-glutamate: step 1/2. In terms of biological role, catalyzes the transfer of a phosphate group to glutamate to form L-glutamate 5-phosphate. This Campylobacter jejuni subsp. jejuni serotype O:6 (strain 81116 / NCTC 11828) protein is Glutamate 5-kinase.